A 300-amino-acid chain; its full sequence is Ribosomal protein bS6--L-glutamate ligase (300 aa).

The ATP-grasp domain maps to Met104–Glu287. Residues Lys141, Glu178–Tyr179, Asp187, and Arg211–Asn213 each bind ATP. 3 residues coordinate Mg(2+): Asp248, Glu260, and Asn262. Mn(2+) is bound by residues Asp248, Glu260, and Asn262.

It belongs to the RimK family. Mg(2+) serves as cofactor. It depends on Mn(2+) as a cofactor.

In terms of biological role, an L-glutamate ligase that catalyzes the ATP-dependent post-translational addition of glutamate residues to the C-terminus of ribosomal protein bS6 (RpsF). Is also able to catalyze the synthesis of poly-alpha-glutamate in vitro, via ATP hydrolysis from unprotected glutamate as substrate. The number of glutamate residues added to either RpsF or to poly-alpha-glutamate changes with pH. The polypeptide is Ribosomal protein bS6--L-glutamate ligase (Escherichia fergusonii (strain ATCC 35469 / DSM 13698 / CCUG 18766 / IAM 14443 / JCM 21226 / LMG 7866 / NBRC 102419 / NCTC 12128 / CDC 0568-73)).